The sequence spans 308 residues: Ribonuclease Z (308 aa).

Residues histidine 63, histidine 65, aspartate 67, histidine 68, histidine 140, aspartate 211, and histidine 269 each coordinate Zn(2+). Aspartate 67 functions as the Proton acceptor in the catalytic mechanism.

This sequence belongs to the RNase Z family. Homodimer. Zn(2+) is required as a cofactor.

The catalysed reaction is Endonucleolytic cleavage of RNA, removing extra 3' nucleotides from tRNA precursor, generating 3' termini of tRNAs. A 3'-hydroxy group is left at the tRNA terminus and a 5'-phosphoryl group is left at the trailer molecule.. Zinc phosphodiesterase, which displays some tRNA 3'-processing endonuclease activity. Probably involved in tRNA maturation, by removing a 3'-trailer from precursor tRNA. In Bacillus velezensis (strain DSM 23117 / BGSC 10A6 / LMG 26770 / FZB42) (Bacillus amyloliquefaciens subsp. plantarum), this protein is Ribonuclease Z.